The primary structure comprises 462 residues: tRNA wybutosine-synthesizing protein 2 (462 aa).

S-adenosyl-L-methionine-binding positions include Ser257, Lys264, and 305 to 306 (EL).

The protein belongs to the class I-like SAM-binding methyltransferase superfamily. TRM5/TYW2 family.

It is found in the cytoplasm. It catalyses the reaction 4-demethylwyosine(37) in tRNA(Phe) + S-adenosyl-L-methionine = 4-demethyl-7-[(3S)-3-amino-3-carboxypropyl]wyosine(37) in tRNA(Phe) + S-methyl-5'-thioadenosine + H(+). The protein operates within tRNA modification; wybutosine-tRNA(Phe) biosynthesis. S-adenosyl-L-methionine-dependent transferase that acts as a component of the wybutosine biosynthesis pathway. Wybutosine is a hyper modified guanosine with a tricyclic base found at the 3'-position adjacent to the anticodon of eukaryotic phenylalanine tRNA. Catalyzes the transfer of the alpha-amino-alpha-carboxypropyl (acp) group from S-adenosyl-L-methionine to the C-7 position of 4-demethylwyosine (imG-14) to produce wybutosine-86. This Saccharomyces cerevisiae (strain ATCC 204508 / S288c) (Baker's yeast) protein is tRNA wybutosine-synthesizing protein 2 (TRM12).